The sequence spans 163 residues: ATP synthase subunit b 1 (163 aa).

The chain crosses the membrane as a helical span at residues 5–25 (FDATFFAFVGLILFLALVVYL).

Belongs to the ATPase B chain family. In terms of assembly, F-type ATPases have 2 components, F(1) - the catalytic core - and F(0) - the membrane proton channel. F(1) has five subunits: alpha(3), beta(3), gamma(1), delta(1), epsilon(1). F(0) has three main subunits: a(1), b(2) and c(10-14). The alpha and beta chains form an alternating ring which encloses part of the gamma chain. F(1) is attached to F(0) by a central stalk formed by the gamma and epsilon chains, while a peripheral stalk is formed by the delta and b chains.

Its subcellular location is the cell inner membrane. Functionally, f(1)F(0) ATP synthase produces ATP from ADP in the presence of a proton or sodium gradient. F-type ATPases consist of two structural domains, F(1) containing the extramembraneous catalytic core and F(0) containing the membrane proton channel, linked together by a central stalk and a peripheral stalk. During catalysis, ATP synthesis in the catalytic domain of F(1) is coupled via a rotary mechanism of the central stalk subunits to proton translocation. Its function is as follows. Component of the F(0) channel, it forms part of the peripheral stalk, linking F(1) to F(0). The sequence is that of ATP synthase subunit b 1 from Rhizobium etli (strain ATCC 51251 / DSM 11541 / JCM 21823 / NBRC 15573 / CFN 42).